A 176-amino-acid chain; its full sequence is Putative ribosomal protein eS10-like (176 aa).

The tract at residues 104-176 (TLHRSRPETG…CGRGRGQPPQ (73 aa)) is disordered. Residues 108 to 139 (SRPETGRPRPKGLEGKRPARLTRREADRDTYR) show a composition bias toward basic and acidic residues.

The protein belongs to the eukaryotic ribosomal protein eS10 family.

This chain is Putative ribosomal protein eS10-like (RPS10P5), found in Homo sapiens (Human).